We begin with the raw amino-acid sequence, 404 residues long: Probable eukaryotic initiation factor 4A (404 aa).

Residues methionine 1 to phenylalanine 28 form a disordered region. The Q motif signature appears at proline 26–glutamine 54. A Helicase ATP-binding domain is found at isoleucine 57–isoleucine 231. Alanine 70–threonine 77 contacts ATP. The DEAD box motif lies at aspartate 179–aspartate 182. The region spanning glycine 242–leucine 402 is the Helicase C-terminal domain.

Belongs to the DEAD box helicase family. eIF4A subfamily. As to quaternary structure, eIF4F is a multi-subunit complex, the composition of which varies with external and internal environmental conditions. It is composed of at least EIF4A, EIF4E and EIF4G.

It carries out the reaction ATP + H2O = ADP + phosphate + H(+). Its function is as follows. ATP-dependent RNA helicase which is a subunit of the eIF4F complex involved in cap recognition and is required for mRNA binding to ribosome. In the current model of translation initiation, eIF4A unwinds RNA secondary structures in the 5'-UTR of mRNAs which is necessary to allow efficient binding of the small ribosomal subunit, and subsequent scanning for the initiator codon. This Trypanosoma brucei brucei (strain 927/4 GUTat10.1) protein is Probable eukaryotic initiation factor 4A.